A 288-amino-acid polypeptide reads, in one-letter code: Large ribosomal subunit protein uL2 (288 aa).

Disordered stretches follow at residues 1–46 (MAIH…RNVY) and 226–288 (MVMN…RGKK). Positions 235–248 (NGGGQGKSKGGGGR) are enriched in gly residues. Basic residues predominate over residues 279–288 (HNGRKPRGKK).

It belongs to the universal ribosomal protein uL2 family. As to quaternary structure, part of the 50S ribosomal subunit. Forms a bridge to the 30S subunit in the 70S ribosome.

Its function is as follows. One of the primary rRNA binding proteins. Required for association of the 30S and 50S subunits to form the 70S ribosome, for tRNA binding and peptide bond formation. It has been suggested to have peptidyltransferase activity; this is somewhat controversial. Makes several contacts with the 16S rRNA in the 70S ribosome. This chain is Large ribosomal subunit protein uL2, found in Opitutus terrae (strain DSM 11246 / JCM 15787 / PB90-1).